The sequence spans 685 residues: Probable inactive leucine-rich repeat receptor-like protein kinase At1g66830 (685 aa).

The first 21 residues, 1–21 (MSQLFLILCFILTHFFAIATS), serve as a signal peptide directing secretion. Over 22–305 (LNDQGLALLS…RRANHHSRLC (284 aa)) the chain is Extracellular. N38 and N48 each carry an N-linked (GlcNAc...) asparagine glycan. 8 LRR repeats span residues 65 to 89 (DMRV…IGSL), 90 to 113 (LSLR…LFGL), 115 to 136 (GLQS…EIGS), 137 to 161 (LKSL…LIPC), 162 to 185 (KKLK…LGSN), 186 to 210 (LVHL…VGSL), 212 to 234 (NLKG…SLGN), and 235 to 260 (LPEL…VLLN). N151 carries N-linked (GlcNAc...) asparagine glycosylation. N-linked (GlcNAc...) asparagine glycosylation occurs at N193. Residue N247 is glycosylated (N-linked (GlcNAc...) asparagine). Residues 306 to 326 (IILTATGGTVAGIIFLASLFI) traverse the membrane as a helical segment. Over 327-685 (YYLRKASARA…ESFEKLVTSI (359 aa)) the chain is Cytoplasmic. A Protein kinase domain is found at 397 to 682 (KASAFLLGKS…SVLESFEKLV (286 aa)). Phosphoserine is present on residues S399, S480, and S590.

Belongs to the protein kinase superfamily. Ser/Thr protein kinase family.

It is found in the cell membrane. This chain is Probable inactive leucine-rich repeat receptor-like protein kinase At1g66830, found in Arabidopsis thaliana (Mouse-ear cress).